The sequence spans 381 residues: DNA double-strand break repair protein Mre11 (381 aa).

Mn(2+) contacts are provided by Asp9, His11, Asp50, and Asp85. His86 serves as the catalytic Proton donor. The Mn(2+) site is built by His156, His187, and His189.

It belongs to the MRE11/RAD32 family. As to quaternary structure, homodimer. Forms a heterotetramer composed of two Mre11 subunits and two Rad50 subunits. The cofactor is Mn(2+).

Nuclease activity is regulated by Rad50. In terms of biological role, part of the Rad50/Mre11 complex, which is involved in the early steps of DNA double-strand break (DSB) repair. The complex may facilitate opening of the processed DNA ends to aid in the recruitment of HerA and NurA. Mre11 binds to DSB ends and has both double-stranded 3'-5' exonuclease activity and single-stranded endonuclease activity. This chain is DNA double-strand break repair protein Mre11, found in Saccharolobus solfataricus (strain ATCC 35092 / DSM 1617 / JCM 11322 / P2) (Sulfolobus solfataricus).